Reading from the N-terminus, the 202-residue chain is Outer-membrane lipoprotein LolB (202 aa).

The N-terminal stretch at 1–18 (MFRRTYFWLMLLPLFMVG) is a signal peptide. The N-palmitoyl cysteine moiety is linked to residue cysteine 19. The S-diacylglycerol cysteine moiety is linked to residue cysteine 19.

This sequence belongs to the LolB family. As to quaternary structure, monomer.

It is found in the cell outer membrane. Functionally, plays a critical role in the incorporation of lipoproteins in the outer membrane after they are released by the LolA protein. The protein is Outer-membrane lipoprotein LolB of Vibrio vulnificus (strain YJ016).